Reading from the N-terminus, the 338-residue chain is Protein RecA (338 aa).

Residue 66 to 73 (GPESSGKT) participates in ATP binding.

It belongs to the RecA family.

Its subcellular location is the cytoplasm. In terms of biological role, can catalyze the hydrolysis of ATP in the presence of single-stranded DNA, the ATP-dependent uptake of single-stranded DNA by duplex DNA, and the ATP-dependent hybridization of homologous single-stranded DNAs. It interacts with LexA causing its activation and leading to its autocatalytic cleavage. This chain is Protein RecA, found in Geobacter sulfurreducens (strain ATCC 51573 / DSM 12127 / PCA).